Reading from the N-terminus, the 385-residue chain is NADH-quinone oxidoreductase subunit D 2 (385 aa).

The protein belongs to the complex I 49 kDa subunit family. NDH-1 is composed of 14 different subunits. Subunits NuoB, C, D, E, F, and G constitute the peripheral sector of the complex.

The protein localises to the cell membrane. It carries out the reaction a quinone + NADH + 5 H(+)(in) = a quinol + NAD(+) + 4 H(+)(out). NDH-1 shuttles electrons from NADH, via FMN and iron-sulfur (Fe-S) centers, to quinones in the respiratory chain. The immediate electron acceptor for the enzyme in this species is believed to be a menaquinone. Couples the redox reaction to proton translocation (for every two electrons transferred, four hydrogen ions are translocated across the cytoplasmic membrane), and thus conserves the redox energy in a proton gradient. The chain is NADH-quinone oxidoreductase subunit D 2 from Salinispora arenicola (strain CNS-205).